A 500-amino-acid chain; its full sequence is Glutamate--tRNA ligase (500 aa).

The 'HIGH' region motif lies at 12-22; sequence PSPTGHLHIGN. The short motif at 259–263 is the 'KMSKS' region element; it reads KLSKR. Lys262 is a binding site for ATP.

It belongs to the class-I aminoacyl-tRNA synthetase family. Glutamate--tRNA ligase type 1 subfamily. As to quaternary structure, monomer.

The protein localises to the cytoplasm. It catalyses the reaction tRNA(Glu) + L-glutamate + ATP = L-glutamyl-tRNA(Glu) + AMP + diphosphate. In terms of biological role, catalyzes the attachment of glutamate to tRNA(Glu) in a two-step reaction: glutamate is first activated by ATP to form Glu-AMP and then transferred to the acceptor end of tRNA(Glu). This Lactobacillus delbrueckii subsp. bulgaricus protein is Glutamate--tRNA ligase.